A 454-amino-acid chain; its full sequence is SH2 domain-containing protein 4A (454 aa).

Disordered stretches follow at residues 45–65 (AMER…NGKS), 107–131 (EQEA…KSQY), 152–177 (KEEL…SSSS), and 237–302 (RKSK…AYPQ). Over residues 107 to 120 (EQEAEEPRKTHSEE) the composition is skewed to basic and acidic residues. S118 and S124 each carry phosphoserine. The segment covering 240-259 (KAADEKRRSLAKQAREDYKR) has biased composition (basic and acidic residues). A phosphoserine mark is found at S261 and S315. The 94-residue stretch at 347–440 (WFHGILTLKK…LGKELLLYPC (94 aa)) folds into the SH2 domain.

In terms of assembly, interacts with ESR1. Ubiquitously expressed. Aberrantly expressed in some cancers.

It localises to the cytoplasm. Its function is as follows. Inhibits estrogen-induced cell proliferation by competing with PLCG for binding to ESR1, blocking the effect of estrogen on PLCG and repressing estrogen-induced proliferation. May play a role in T-cell development and function. The polypeptide is SH2 domain-containing protein 4A (SH2D4A) (Homo sapiens (Human)).